The chain runs to 912 residues: Nitrate reductase [NADH] (912 aa).

The tract at residues 1–99 (SVEPRQPFGR…PRDEGTADAW (99 aa)) is disordered. Positions 13–23 (APATAPTARAP) are enriched in low complexity. Acidic residues predominate over residues 54–68 (AEEDEEDDDEDDEGH). Basic and acidic residues predominate over residues 85–94 (PSTRDPRDEG). Cysteine 186 lines the Mo-molybdopterin pocket. Residues 535 to 610 (DKQFTMSEVR…LDTYRIGELI (76 aa)) form the Cytochrome b5 heme-binding domain. Histidine 570 and histidine 593 together coordinate heme. Positions 651 to 764 (REKVPCRLVD…KGPLGHVEYT (114 aa)) constitute an FAD-binding FR-type domain. Residues 703–706 (RAYT), 720–724 (LVKVY), phenylalanine 725, phenylalanine 732, 737–739 (LMT), serine 788, and threonine 791 each bind FAD.

Belongs to the nitrate reductase family. As to quaternary structure, homodimer. FAD is required as a cofactor. Requires heme as cofactor. The cofactor is Mo-molybdopterin.

It carries out the reaction nitrite + NAD(+) + H2O = nitrate + NADH + H(+). Its function is as follows. Nitrate reductase is a key enzyme involved in the first step of nitrate assimilation in plants, fungi and bacteria. In Hordeum vulgare (Barley), this protein is Nitrate reductase [NADH].